The primary structure comprises 159 residues: Ribosome maturation factor RimP (159 aa).

It belongs to the RimP family.

The protein resides in the cytoplasm. Its function is as follows. Required for maturation of 30S ribosomal subunits. This Streptococcus agalactiae serotype III (strain NEM316) protein is Ribosome maturation factor RimP.